Here is a 427-residue protein sequence, read N- to C-terminus: Cholecystokinin receptor type A (427 aa).

Residues 1–41 (MDAVASLLGNASGIPPPCELGLDNETLFCLDQPPPSKEWQP) are Extracellular-facing. N-linked (GlcNAc...) asparagine glycosylation is found at N10 and N24. A disulfide bridge connects residues C18 and C29. A helical membrane pass occupies residues 42–67 (AVQILLYSLIFLLSVLGNTLVITVLI). The Cytoplasmic portion of the chain corresponds to 68-77 (RNKRMRTVTN). A helical transmembrane segment spans residues 78–104 (IFLLSLAISDLMLCLFCMPFNLIPNLL). Topologically, residues 105 to 115 (KDFIFGSALCK) are extracellular. A disulfide bond links C114 and C196. Residues 116–137 (TTTYLMGTSVSVSTLNLVAISL) traverse the membrane as a helical segment. Topologically, residues 138-157 (ERYGAICKPLQSRVWQTKSH) are cytoplasmic. A helical membrane pass occupies residues 158–178 (ALKVIAATWCLSFAIMTPYPI). At 179–210 (YSNLVPFTKTNNQTANMCRFLLPSDVMQQAWH) the chain is on the extracellular side. Residue N190 is glycosylated (N-linked (GlcNAc...) asparagine). The helical transmembrane segment at 211 to 234 (TFLLLILFLIPGIVMMVAYGMISL) threads the bilayer. Over 235-312 (ELYQGIKFDA…TLMAKKRVIR (78 aa)) the chain is Cytoplasmic. The helical transmembrane segment at 313-333 (MLMVIVVLFFLCWMPIFSANA) threads the bilayer. Over 334 to 348 (WRAYDTVSAERRLSG) the chain is Extracellular. The helical transmembrane segment at 349 to 372 (TPISFILLLSYTSSCVNPIIYCFM) threads the bilayer. At 373 to 427 (NRRFRLGFMATFPCCPNPGPPGPRAEAGEEEEGRTTRASLSRYSYSHMSASAPPS) the chain is on the cytoplasmic side. The S-palmitoyl cysteine moiety is linked to residue C386. A disordered region spans residues 391–427 (GPPGPRAEAGEEEEGRTTRASLSRYSYSHMSASAPPS). The segment covering 411–421 (SLSRYSYSHMS) has biased composition (polar residues).

Belongs to the G-protein coupled receptor 1 family.

It is found in the cell membrane. Functionally, receptor for cholecystokinin. Mediates pancreatic growth and enzyme secretion, smooth muscle contraction of the gall bladder and stomach. Has a 1000-fold higher affinity for CCK rather than for gastrin. It modulates feeding and dopamine-induced behavior in the central and peripheral nervous system. This receptor mediates its action by association with G proteins that activate a phosphatidylinositol-calcium second messenger system. This is Cholecystokinin receptor type A (CCKAR) from Oryctolagus cuniculus (Rabbit).